Here is a 355-residue protein sequence, read N- to C-terminus: 5-formaminoimidazole-4-carboxamide-1-(beta)-D-ribofuranosyl 5'-monophosphate synthetase (355 aa).

5-amino-1-(5-phospho-beta-D-ribosyl)imidazole-4-carboxamide is bound by residues H27 and S94. One can recognise an ATP-grasp domain in the interval 101-332 (TESFAELAVP…YSDMIEENLS (232 aa)). Residues 144-195 (PEKI…TRYY) and E225 each bind ATP. N254 is a 5-amino-1-(5-phospho-beta-D-ribosyl)imidazole-4-carboxamide binding site. 2 residues coordinate Mg(2+): E292 and E305.

This sequence belongs to the phosphohexose mutase family. Mg(2+) serves as cofactor. It depends on Mn(2+) as a cofactor.

The catalysed reaction is 5-amino-1-(5-phospho-beta-D-ribosyl)imidazole-4-carboxamide + formate + ATP = 5-formamido-1-(5-phospho-D-ribosyl)imidazole-4-carboxamide + ADP + phosphate. It participates in purine metabolism; IMP biosynthesis via de novo pathway; 5-formamido-1-(5-phospho-D-ribosyl)imidazole-4-carboxamide from 5-amino-1-(5-phospho-D-ribosyl)imidazole-4-carboxamide (formate route): step 1/1. Catalyzes the ATP- and formate-dependent formylation of 5-aminoimidazole-4-carboxamide-1-beta-d-ribofuranosyl 5'-monophosphate (AICAR) to 5-formaminoimidazole-4-carboxamide-1-beta-d-ribofuranosyl 5'-monophosphate (FAICAR) in the absence of folates. This is 5-formaminoimidazole-4-carboxamide-1-(beta)-D-ribofuranosyl 5'-monophosphate synthetase from Methanococcoides burtonii (strain DSM 6242 / NBRC 107633 / OCM 468 / ACE-M).